The following is a 557-amino-acid chain: Selenoprotein N (557 aa).

Positions 1 to 24 are disordered; it reads MGQARPAARRPHSPDPGAQPAPPR. A signal peptide spans 1–42; the sequence is MGQARPAARRPHSPDPGAQPAPPRRRARALALLGALLAAAAA. Residues 67-102 enclose the EF-hand domain; it reads VLGTDGLFLFSSLDTDQDMYISPEEFKPIAEKLTGS. N-linked (GlcNAc...) asparagine glycosylation is present at N156. Position 428 (U428) is a non-standard amino acid, selenocysteine. N449 and N497 each carry an N-linked (GlcNAc...) asparagine glycan.

In terms of assembly, interacts with RYR1, RYR2 and RYR3. In terms of processing, N-glycosylated.

It is found in the endoplasmic reticulum membrane. Its function is as follows. Plays an important role in cell protection against oxidative stress and in the regulation of redox-related calcium homeostasis. Regulates the calcium level of the ER by protecting the calcium pump ATP2A2 against the oxidoreductase ERO1A-mediated oxidative damage. Within the ER, ERO1A activity increases the concentration of H(2)O(2), which attacks the luminal thiols in ATP2A2 and thus leads to cysteinyl sulfenic acid formation (-SOH) and SEPN1 reduces the SOH back to free thiol (-SH), thus restoring ATP2A2 activity. Acts as a modulator of ryanodine receptor (RyR) activity: protects RyR from oxidation due to increased oxidative stress, or directly controls the RyR redox state, regulating the RyR-mediated calcium mobilization required for normal muscle development and differentiation. Essential for muscle regeneration and satellite cell maintenance in skeletal muscle. In Mus musculus (Mouse), this protein is Selenoprotein N.